The primary structure comprises 68 residues: uncharacterized protein (68 aa).

The N-terminal stretch at 1 to 21 (MELYREYPAWLIFLRRTYAVA) is a signal peptide.

This is an uncharacterized protein from Escherichia coli O157:H7.